Consider the following 469-residue polypeptide: Cysteine--tRNA ligase (469 aa).

Cys-33 contacts Zn(2+). The 'HIGH' region motif lies at 35 to 45; it reads PTVYNLLHIGN. Zn(2+)-binding residues include Cys-214, His-239, and Glu-243. Positions 271–275 match the 'KMSKS' region motif; it reads KMSKS. Lys-274 is an ATP binding site.

Belongs to the class-I aminoacyl-tRNA synthetase family. As to quaternary structure, monomer. The cofactor is Zn(2+).

The protein resides in the cytoplasm. The enzyme catalyses tRNA(Cys) + L-cysteine + ATP = L-cysteinyl-tRNA(Cys) + AMP + diphosphate. The sequence is that of Cysteine--tRNA ligase from Petrotoga mobilis (strain DSM 10674 / SJ95).